The primary structure comprises 287 residues: 4-diphosphocytidyl-2-C-methyl-D-erythritol kinase (287 aa).

Lys11 is a catalytic residue. Position 93–103 (93–103 (PFGAGLGGGSS)) interacts with ATP. Asp135 is a catalytic residue.

This sequence belongs to the GHMP kinase family. IspE subfamily.

It catalyses the reaction 4-CDP-2-C-methyl-D-erythritol + ATP = 4-CDP-2-C-methyl-D-erythritol 2-phosphate + ADP + H(+). The protein operates within isoprenoid biosynthesis; isopentenyl diphosphate biosynthesis via DXP pathway; isopentenyl diphosphate from 1-deoxy-D-xylulose 5-phosphate: step 3/6. Functionally, catalyzes the phosphorylation of the position 2 hydroxy group of 4-diphosphocytidyl-2C-methyl-D-erythritol. The chain is 4-diphosphocytidyl-2-C-methyl-D-erythritol kinase from Pelodictyon phaeoclathratiforme (strain DSM 5477 / BU-1).